A 739-amino-acid polypeptide reads, in one-letter code: MPNMEPTTKEIKEQKIYQEMGLTDSEYELVCSILGREPNYTETGLFSVMWSEHCSYKNSKPVLRKFPTEGKQVLQGPGEGAGIVDIGDGLGVAFKVESHNHPSYVEPYQGAATGVGGIIRDVFSMGARPIAMLNSLRFGELDTPHAKYLVSEVVAGIAGYGNSIGIPTVGGEIQFDPCYTKNPLVNAMCVGLIEAKDIQKGQAKGIGNPVMYVGAKTGRDGIHGATFASVEFSEEGEQQRSAVQVGDPFMEKLLLEACLDVIRDHSDILVGIQDMGAAGLVSSSSEMASKAGAGLELIMDDVPQRELNMTPYEMLLSESQERMLLCVKKGHVEEIQALFERYGLEAVVIGQVTDDKMYKIIHHGEVVANVPVDALAEDAPVYHKPSKEPARYQAFQEEESFVPVMEDVVGVWKELLAQPTIASKRHIYEQYDYQVRTDTAVVPGSDAAIVRVRGTEKAIAMTTDCNSRYLYLDPEVGGAIAVAEAARNIVCSGGKPLAITDGLNFGNPEKPEIFWEIEKAADGISAACLELDTPVISGNVSLYNETDGTGIYPTPVIGMVGLVEDLAHITTQDFKNSGDVIFLIGETKAEYSGSELQKLQQGKISGRAPELDLTTEKKYQQLLLTAIQEGLVASSHDLAEGGFGVALAEATFKAGLGADVEVPFELNQLFSESQSRFLVSVKPENEAAFAQLMELEKVYRLGVVTEDDTIRVKHKEDQVTAKTTELRSIWEGAIPCLLK.

Histidine 53 is an active-site residue. Tyrosine 56 and lysine 95 together coordinate ATP. Residue glutamate 97 participates in Mg(2+) binding. Residues 98-101 (SHNH) and arginine 120 contribute to the substrate site. The Proton acceptor role is filled by histidine 99. Residue aspartate 121 participates in Mg(2+) binding. Residue glutamine 244 participates in substrate binding. Aspartate 274 is a Mg(2+) binding site. 318–320 (ESQ) contributes to the substrate binding site. ATP contacts are provided by aspartate 501 and glycine 538. Residue asparagine 539 participates in Mg(2+) binding. Substrate is bound at residue serine 541.

The protein belongs to the FGAMS family. As to quaternary structure, monomer. Part of the FGAM synthase complex composed of 1 PurL, 1 PurQ and 2 PurS subunits.

The protein resides in the cytoplasm. It carries out the reaction N(2)-formyl-N(1)-(5-phospho-beta-D-ribosyl)glycinamide + L-glutamine + ATP + H2O = 2-formamido-N(1)-(5-O-phospho-beta-D-ribosyl)acetamidine + L-glutamate + ADP + phosphate + H(+). It participates in purine metabolism; IMP biosynthesis via de novo pathway; 5-amino-1-(5-phospho-D-ribosyl)imidazole from N(2)-formyl-N(1)-(5-phospho-D-ribosyl)glycinamide: step 1/2. In terms of biological role, part of the phosphoribosylformylglycinamidine synthase complex involved in the purines biosynthetic pathway. Catalyzes the ATP-dependent conversion of formylglycinamide ribonucleotide (FGAR) and glutamine to yield formylglycinamidine ribonucleotide (FGAM) and glutamate. The FGAM synthase complex is composed of three subunits. PurQ produces an ammonia molecule by converting glutamine to glutamate. PurL transfers the ammonia molecule to FGAR to form FGAM in an ATP-dependent manner. PurS interacts with PurQ and PurL and is thought to assist in the transfer of the ammonia molecule from PurQ to PurL. This is Phosphoribosylformylglycinamidine synthase subunit PurL from Listeria monocytogenes serotype 4b (strain CLIP80459).